A 120-amino-acid chain; its full sequence is Large ribosomal subunit protein bL21 (120 aa).

The protein belongs to the bacterial ribosomal protein bL21 family. Part of the 50S ribosomal subunit. Contacts protein L20.

This protein binds to 23S rRNA in the presence of protein L20. The protein is Large ribosomal subunit protein bL21 of Rhizorhabdus wittichii (strain DSM 6014 / CCUG 31198 / JCM 15750 / NBRC 105917 / EY 4224 / RW1) (Sphingomonas wittichii).